A 520-amino-acid polypeptide reads, in one-letter code: Zinc finger and BTB domain-containing protein 45 (520 aa).

Residues 33-96 (CDVTVRIREA…LYSGSLVVAQ (64 aa)) enclose the BTB domain. Disordered stretches follow at residues 182 to 272 (PAPP…GGAG) and 337 to 372 (FHLGAPGPPAPTPPTPSGPAPAPPPTFYPTLQPDAA). The span at 206–225 (RGEEDDDEETDEETDAEEGE) shows a compositional bias: acidic residues. Over residues 342–363 (PGPPAPTPPTPSGPAPAPPPTF) the composition is skewed to pro residues. C2H2-type zinc fingers lie at residues 412 to 434 (YECSHCRKTFSSRKNYTKHMFIH), 440 to 462 (HQCAVCWRSFSLRDYLLKHMVTH), 468 to 490 (FQCAVCAKRFTQKSSLNVHMRTH), and 495 to 517 (APCPACGKVFSHRALLERHLAAH).

This sequence belongs to the krueppel C2H2-type zinc-finger protein family.

It is found in the nucleus. May be involved in transcriptional regulation. In the central nervous system, may play a role in glial cell differentiation. The protein is Zinc finger and BTB domain-containing protein 45 of Mus musculus (Mouse).